Consider the following 220-residue polypeptide: MADS-box protein AGL24 (220 aa).

The 61-residue stretch at 1–61 (MAREKIRIKK…GKLFEFSSSR (61 aa)) folds into the MADS-box domain. In terms of domain architecture, K-box spans 87 to 177 (LRLENCNLSR…RDKLETLERA (91 aa)). The segment covering 190–200 (SVTTNVSSYDS) has biased composition (polar residues). Residues 190–220 (SVTTNVSSYDSGTPLEDDSDTSLKLGLPSWE) are disordered.

Interacts with IMK3/MRLK. Forms a homodimer and heterodimer with SOC1, AP1 and SVP through MADS-box domain. Interacts with the SEU-LUG corepressor complex when complexed to AP1. Interacts with AGL15 and AGL16. Phosphorylated by IMK3. Induced by vernalization. As to expression, mostly expressed in shoot apical meristems, including floral meristems. Also detected in stems, seedlings, leaves, flowers and siliques, and, to a lower extent, in roots.

The protein resides in the nucleus. Its subcellular location is the cytoplasm. Transcription activator that mediates floral transition in response to vernalization. Promotes inflorescence fate in apical meristems. Acts in a dosage-dependent manner. Probably involved in the transduction of RLK-mediated signaling (e.g. IMK3 pathway). Together with AP1 and SVP, controls the identity of the floral meristem and regulates expression of class B, C and E genes. When associated with SOC1, mediates effect of gibberellins on flowering under short-day conditions, and regulates the expression of LEAFY (LFY), which links floral induction and floral development. Confers inflorescence characteristics to floral primordia and early flowering. In Arabidopsis thaliana (Mouse-ear cress), this protein is MADS-box protein AGL24 (AGL24).